A 180-amino-acid chain; its full sequence is Cytochrome b6-f complex iron-sulfur subunit (180 aa).

Residues 21–43 traverse the membrane as a helical segment; sequence LLTFGTITGTALGALYPVVKYFI. In terms of domain architecture, Rieske spans 66–162; the sequence is VSEYLAKHLP…ATVTEDDKLV (97 aa). Residues Cys108, His110, Cys126, and His129 each coordinate [2Fe-2S] cluster. A disulfide bridge links Cys113 with Cys128.

It belongs to the Rieske iron-sulfur protein family. The 4 large subunits of the cytochrome b6-f complex are cytochrome b6, subunit IV (17 kDa polypeptide, PetD), cytochrome f and the Rieske protein, while the 4 small subunits are PetG, PetL, PetM and PetN. The complex functions as a dimer. Requires [2Fe-2S] cluster as cofactor.

It localises to the cellular thylakoid membrane. The enzyme catalyses 2 oxidized [plastocyanin] + a plastoquinol + 2 H(+)(in) = 2 reduced [plastocyanin] + a plastoquinone + 4 H(+)(out). Its function is as follows. Component of the cytochrome b6-f complex, which mediates electron transfer between photosystem II (PSII) and photosystem I (PSI), cyclic electron flow around PSI, and state transitions. This is Cytochrome b6-f complex iron-sulfur subunit from Thermosynechococcus vestitus (strain NIES-2133 / IAM M-273 / BP-1).